The chain runs to 165 residues: Large ribosomal subunit protein mL49 (165 aa).

Positions T42–T75 are enriched in low complexity. A disordered region spans residues T42 to V81.

Belongs to the mitochondrion-specific ribosomal protein mL49 family. As to quaternary structure, component of the mitochondrial large ribosomal subunit (mt-LSU). Mature N.crassa 74S mitochondrial ribosomes consist of a small (37S) and a large (54S) subunit. The 37S small subunit contains a 16S ribosomal RNA (16S mt-rRNA) and 32 different proteins. The 54S large subunit contains a 23S rRNA (23S mt-rRNA) and 42 different proteins.

Its subcellular location is the mitochondrion. Component of the mitochondrial ribosome (mitoribosome), a dedicated translation machinery responsible for the synthesis of mitochondrial genome-encoded proteins, including at least some of the essential transmembrane subunits of the mitochondrial respiratory chain. The mitoribosomes are attached to the mitochondrial inner membrane and translation products are cotranslationally integrated into the membrane. This chain is Large ribosomal subunit protein mL49 (img2), found in Neurospora crassa (strain ATCC 24698 / 74-OR23-1A / CBS 708.71 / DSM 1257 / FGSC 987).